We begin with the raw amino-acid sequence, 471 residues long: Sulfate adenylyltransferase subunit 1 (471 aa).

Residues 22–237 enclose the tr-type G domain; it reads KELLRFLTCG…LESVQITGAK (216 aa). A G1 region spans residues 31 to 38; sequence GSVDDGKS. 31-38 serves as a coordination point for GTP; sequence GSVDDGKS. Positions 89–93 are G2; that stretch reads GITID. Residues 110 to 113 are G3; the sequence is DTPG. GTP is bound by residues 110–114 and 165–168; these read DTPGH and NKMD. A G4 region spans residues 165–168; it reads NKMD. Residues 202–204 form a G5 region; it reads SAL.

Belongs to the TRAFAC class translation factor GTPase superfamily. Classic translation factor GTPase family. CysN/NodQ subfamily. As to quaternary structure, heterodimer composed of CysD, the smaller subunit, and CysN.

It carries out the reaction sulfate + ATP + H(+) = adenosine 5'-phosphosulfate + diphosphate. It participates in sulfur metabolism; hydrogen sulfide biosynthesis; sulfite from sulfate: step 1/3. Functionally, with CysD forms the ATP sulfurylase (ATPS) that catalyzes the adenylation of sulfate producing adenosine 5'-phosphosulfate (APS) and diphosphate, the first enzymatic step in sulfur assimilation pathway. APS synthesis involves the formation of a high-energy phosphoric-sulfuric acid anhydride bond driven by GTP hydrolysis by CysN coupled to ATP hydrolysis by CysD. This Saccharophagus degradans (strain 2-40 / ATCC 43961 / DSM 17024) protein is Sulfate adenylyltransferase subunit 1.